The primary structure comprises 294 residues: Glyceraldehyde-3-phosphate dehydrogenase (294 aa).

Residues Asp19, Arg63, and Thr105 each coordinate NAD(+). D-glyceraldehyde 3-phosphate contacts are provided by residues 134 to 136 (SCT) and Thr165. Residue Cys135 is the Nucleophile of the active site. The residue at position 177 (Lys177) is an N6-acetyllysine. D-glyceraldehyde 3-phosphate contacts are provided by residues 194–195 (TG) and Arg217. Lys234 carries the post-translational modification N6-acetyllysine.

Belongs to the glyceraldehyde-3-phosphate dehydrogenase family. As to quaternary structure, homotetramer.

It is found in the cytoplasm. It carries out the reaction D-glyceraldehyde 3-phosphate + phosphate + NAD(+) = (2R)-3-phospho-glyceroyl phosphate + NADH + H(+). Its pathway is carbohydrate degradation; glycolysis; pyruvate from D-glyceraldehyde 3-phosphate: step 1/5. Functionally, catalyzes the oxidative phosphorylation of glyceraldehyde 3-phosphate (G3P) to 1,3-bisphosphoglycerate (BPG) using the cofactor NAD. The first reaction step involves the formation of a hemiacetal intermediate between G3P and a cysteine residue, and this hemiacetal intermediate is then oxidized to a thioester, with concomitant reduction of NAD to NADH. The reduced NADH is then exchanged with the second NAD, and the thioester is attacked by a nucleophilic inorganic phosphate to produce BPG. This Pseudescherichia vulneris (Escherichia vulneris) protein is Glyceraldehyde-3-phosphate dehydrogenase (gap).